The sequence spans 666 residues: UvrABC system protein B (666 aa).

Positions 26-414 (DSFQKGEKKV…KVVEQIIRPT (389 aa)) constitute a Helicase ATP-binding domain. Residue 39–46 (GVTGSGKT) coordinates ATP. The Beta-hairpin motif lies at 92–115 (YYDYYQPEAYVPSSDTFIEKDSSI). The region spanning 429–591 (QIEDLLVEIR…ITPLTIKKEV (163 aa)) is the Helicase C-terminal domain. Positions 625–660 (EVLKEKLREEMMKAAKELDFERAAILRDKMLSIQTE) constitute a UVR domain.

The protein belongs to the UvrB family. As to quaternary structure, forms a heterotetramer with UvrA during the search for lesions. Interacts with UvrC in an incision complex.

Its subcellular location is the cytoplasm. In terms of biological role, the UvrABC repair system catalyzes the recognition and processing of DNA lesions. A damage recognition complex composed of 2 UvrA and 2 UvrB subunits scans DNA for abnormalities. Upon binding of the UvrA(2)B(2) complex to a putative damaged site, the DNA wraps around one UvrB monomer. DNA wrap is dependent on ATP binding by UvrB and probably causes local melting of the DNA helix, facilitating insertion of UvrB beta-hairpin between the DNA strands. Then UvrB probes one DNA strand for the presence of a lesion. If a lesion is found the UvrA subunits dissociate and the UvrB-DNA preincision complex is formed. This complex is subsequently bound by UvrC and the second UvrB is released. If no lesion is found, the DNA wraps around the other UvrB subunit that will check the other stand for damage. The chain is UvrABC system protein B from Leptospira interrogans serogroup Icterohaemorrhagiae serovar copenhageni (strain Fiocruz L1-130).